Here is a 228-residue protein sequence, read N- to C-terminus: Octanoyltransferase (228 aa).

Positions 37–217 (AGGPDTLLLL…AVCDALDGRL (181 aa)) constitute a BPL/LPL catalytic domain. Substrate is bound by residues 75–82 (RGGKITWH), 147–149 (AIG), and 160–162 (GFA). The active-site Acyl-thioester intermediate is the C178.

Belongs to the LipB family.

The protein localises to the cytoplasm. It carries out the reaction octanoyl-[ACP] + L-lysyl-[protein] = N(6)-octanoyl-L-lysyl-[protein] + holo-[ACP] + H(+). It functions in the pathway protein modification; protein lipoylation via endogenous pathway; protein N(6)-(lipoyl)lysine from octanoyl-[acyl-carrier-protein]: step 1/2. Functionally, catalyzes the transfer of endogenously produced octanoic acid from octanoyl-acyl-carrier-protein onto the lipoyl domains of lipoate-dependent enzymes. Lipoyl-ACP can also act as a substrate although octanoyl-ACP is likely to be the physiological substrate. The sequence is that of Octanoyltransferase from Mycolicibacterium smegmatis (strain ATCC 700084 / mc(2)155) (Mycobacterium smegmatis).